We begin with the raw amino-acid sequence, 2207 residues long: Desmoplakin-B (2207 aa).

3 coiled-coil regions span residues 506–916 (MEEL…EAGK), 952–1000 (AKHA…EQGR), and 1029–1063 (TERLQRLTETLTKDRQRVEEELRAVRLEHEELLKN). Residues 905–924 (KQRQVAEEEAGKRRRTESQL) are compositionally biased toward basic and acidic residues. The disordered stretch occupies residues 905 to 933 (KQRQVAEEEAGKRRRTESQLEKSSQAMRE). 9 Plectin repeats span residues 1369-1406 (LLEAQAATGYIIDPQANTKMTVEEACLNGVVDEADKKQ), 1407-1445 (LLIAEAACVGFRDPKTAKLLPVSQAMKKGIIDRETTLRL), 1446-1483 (LQAQEAAGGILDPILSVYLPKDTAMDRDLVDEDLYQAL), 1571-1609 (YLRGSTCIAGIYDEAGECTLPIYQAMKNGLLRPGTTLEL), 1610-1647 (LEAQAASGFVIDPINNEYYTVEEACQKGLVGVEFKDKL), 1685-1723 (LLEAQIASGGIIDPKHSHRIDVDVAYQRGYFDQGMNQIL), 1783-1811 (IVDPDSNKEMTVREAYEKKLIDYETFLEL), 1992-2029 (LLEAQACTGGIVSPDNGRRMSIQEATRVGVLDDEMANR), and 2068-2106 (FLEFQYLTGGLFDPELGCRRSLEEALQMGWLDMRAAQRL). Residues 2155-2164 (ISSPYNLSNP) show a composition bias toward polar residues. The interval 2155–2207 (ISSPYNLSNPGSASGSRSGSRRGSVDYSLSPSSSSRYSSFSYSRTSFSSRSLS) is disordered. The segment covering 2165–2207 (GSASGSRSGSRRGSVDYSLSPSSSSRYSSFSYSRTSFSSRSLS) has biased composition (low complexity).

This sequence belongs to the plakin or cytolinker family.

The protein resides in the cell junction. Its subcellular location is the desmosome. It is found in the cell membrane. In terms of biological role, involved in the organization of desmosome cell-cell junctions. Of particular importance in cell adhesion in the skin and during cardiac development. May also play a role in the regulation of Wnt, TGF-beta and Hippo signaling pathways. This chain is Desmoplakin-B, found in Danio rerio (Zebrafish).